Reading from the N-terminus, the 150-residue chain is Actin-related protein 2/3 complex subunit 5-C (150 aa).

Residues 21–45 (NKFVDEEEAGEGQQGPDEGEVDSAI) are disordered.

Belongs to the ARPC5 family. Component of the Arp2/3 complex composed of actr2/arp2, actr3/arp3, arpc1 (arpc1a or arpc1b), arpc2, arpc3, arpc4 and arpc5.

Its subcellular location is the cytoplasm. The protein localises to the cytoskeleton. The protein resides in the cell projection. It is found in the nucleus. Functionally, component of the Arp2/3 complex, a multiprotein complex that mediates actin polymerization upon stimulation by nucleation-promoting factor (NPF). The Arp2/3 complex mediates the formation of branched actin networks in the cytoplasm, providing the force for cell motility. In addition to its role in the cytoplasmic cytoskeleton, the Arp2/3 complex also promotes actin polymerization in the nucleus, thereby regulating gene transcription and repair of damaged DNA. The Arp2/3 complex promotes homologous recombination (HR) repair in response to DNA damage by promoting nuclear actin polymerization, leading to drive motility of double-strand breaks (DSBs). The sequence is that of Actin-related protein 2/3 complex subunit 5-C (arpc5-c) from Xenopus laevis (African clawed frog).